The primary structure comprises 128 residues: NADPH-dependent 7-cyano-7-deazaguanine reductase (128 aa).

Cysteine 39 functions as the Thioimide intermediate in the catalytic mechanism. Aspartate 46 (proton donor) is an active-site residue. Residues 61–63 (IEL) and 80–81 (HE) each bind substrate.

The protein belongs to the GTP cyclohydrolase I family. QueF type 1 subfamily.

It localises to the cytoplasm. It carries out the reaction 7-aminomethyl-7-carbaguanine + 2 NADP(+) = 7-cyano-7-deazaguanine + 2 NADPH + 3 H(+). It functions in the pathway tRNA modification; tRNA-queuosine biosynthesis. Its function is as follows. Catalyzes the NADPH-dependent reduction of 7-cyano-7-deazaguanine (preQ0) to 7-aminomethyl-7-deazaguanine (preQ1). The sequence is that of NADPH-dependent 7-cyano-7-deazaguanine reductase from Magnetococcus marinus (strain ATCC BAA-1437 / JCM 17883 / MC-1).